Reading from the N-terminus, the 370-residue chain is MREETAEQPAPLRSGLTTGSCATATSLAAARLLLSGQISDAVEIVLPKGKQVQMRLEFCRLVDNFAEAGTLKDAGDDPDVTHGALVFARVRLEMAPGVRFVAGAGVGSVTRPGLVLAVGEPAINPVPRRMMTEHLLQLAEELGYSGGFEVTIGVEGGEALALKTMNPRLGILGGLSILGTSGIVRPFSCAAYIASIHQGIDVATTNGYRHIAACTGNASEDTMRRVYNIPDIALIEMGDFVGAVLKHLRKVPVDKLSLCGGFGKISKLAAGHMDLHSRHSSIDLPQLALWAADTGADADLQQRIRDANTSQQALAMCATAGVPLGDEVCRHALAFARSVVPAQVQVEVFAIDRQGGIVGQAGVALSKEHT.

Belongs to the CbiD family.

It catalyses the reaction Co-precorrin-5B + S-adenosyl-L-methionine = Co-precorrin-6A + S-adenosyl-L-homocysteine. It functions in the pathway cofactor biosynthesis; adenosylcobalamin biosynthesis; cob(II)yrinate a,c-diamide from sirohydrochlorin (anaerobic route): step 6/10. Its function is as follows. Catalyzes the methylation of C-1 in cobalt-precorrin-5B to form cobalt-precorrin-6A. In Pseudomonas savastanoi pv. phaseolicola (strain 1448A / Race 6) (Pseudomonas syringae pv. phaseolicola (strain 1448A / Race 6)), this protein is Cobalt-precorrin-5B C(1)-methyltransferase.